The primary structure comprises 207 residues: Large ribosomal subunit protein uL4 (207 aa).

The interval 49–78 (HAVKNRSAVSGGGRKPWRQKGTGRARQGSI) is disordered.

It belongs to the universal ribosomal protein uL4 family. In terms of assembly, part of the 50S ribosomal subunit.

Functionally, one of the primary rRNA binding proteins, this protein initially binds near the 5'-end of the 23S rRNA. It is important during the early stages of 50S assembly. It makes multiple contacts with different domains of the 23S rRNA in the assembled 50S subunit and ribosome. Its function is as follows. Forms part of the polypeptide exit tunnel. The polypeptide is Large ribosomal subunit protein uL4 (Streptococcus sanguinis (strain SK36)).